The sequence spans 584 residues: Putative sel1-like repeat-containing protein L18 (584 aa).

6 Sel1-like repeats span residues 132 to 167 (SMAQYNLGQMYYRGISTKKNIQKAIKWITKSADQNN), 168 to 203 (KYGLINLARFYEYGDGVLLDIDKATQLLEQASCQNF), 204 to 237 (SKAQFYLGRIYMYKDPPDYKLAFKYYQQAANQNH), 238 to 273 (SSAQYFIAVFYKTGKCVAQDYKKAVHWLTLAASQGL), 274 to 309 (NSAKIKLAEMYMKGIDVEQNYHKAFELLNSSIYDDG), and 316 to 351 (EVAMTELACMYKRGLGIEKNISKAIYLHIKSRNTKN).

This Acanthamoeba polyphaga (Amoeba) protein is Putative sel1-like repeat-containing protein L18.